The chain runs to 186 residues: UPF0200 protein PH1008 (186 aa).

Glycine 7 to glycine 14 lines the ATP pocket.

Belongs to the UPF0200 family.

In Pyrococcus horikoshii (strain ATCC 700860 / DSM 12428 / JCM 9974 / NBRC 100139 / OT-3), this protein is UPF0200 protein PH1008.